Here is a 213-residue protein sequence, read N- to C-terminus: SEAPAETAAPAPAEKSPAKKKKAAKKPGAGAAKRKAAGPPVSELITKAVAASKERNGLSLAALKKALAAGGYDVEKNNSRIKLGLKSLVSKGTLVETKGTGASGSFKLDKKAASGEAKPKPKKAGAAKPKKPAGATPKKPKKAAGAKKAVKKTPKKAPKPKAAAKPKVAKPKSPAKVAKSPKKAKAVKPKAAKPKAPKPKAAKAKKTAAKKKK.

Serine 1 is modified (N-acetylserine). The span at 1–15 (SEAPAETAAPAPAEK) shows a compositional bias: low complexity. The interval 1–41 (SEAPAETAAPAPAEKSPAKKKKAAKKPGAGAAKRKAAGPPV) is disordered. Lysine 15 carries the N6-acetyllysine modification. N6-(beta-hydroxybutyryl)lysine is present on residues lysine 35 and lysine 53. The H15 domain maps to 37–110 (AGPPVSELIT…GASGSFKLDK (74 aa)). The residue at position 55 (arginine 55) is a Citrulline. Lysine 65, lysine 86, and lysine 91 each carry N6-(beta-hydroxybutyryl)lysine. The tract at residues 92-213 (GTLVETKGTG…AKKTAAKKKK (122 aa)) is disordered. Serine 105 carries the phosphoserine modification. Lysine 107 is modified (N6-(beta-hydroxybutyryl)lysine). The span at 107-119 (KLDKKAASGEAKP) shows a compositional bias: basic and acidic residues. Composition is skewed to basic residues over residues 120–131 (KPKKAGAAKPKK), 138–170 (KKPK…KVAK), and 179–213 (KSPK…KKKK).

It belongs to the histone H1/H5 family. H1 histones are progressively phosphorylated during the cell cycle, becoming maximally phosphorylated during late G2 phase and M phase, and being dephosphorylated sharply thereafter. In terms of processing, citrullination at Arg-55 (H1R54ci) by PADI4 takes place within the DNA-binding site of H1 and results in its displacement from chromatin and global chromatin decondensation, thereby promoting pluripotency and stem cell maintenance.

Its subcellular location is the nucleus. The protein resides in the chromosome. Functionally, histones H1 are necessary for the condensation of nucleosome chains into higher-order structures. This Oryctolagus cuniculus (Rabbit) protein is Histone H1.3.